Reading from the N-terminus, the 707-residue chain is Eomesodermin homolog (707 aa).

Over residues G27–S42 the composition is skewed to gly residues. The tract at residues G27–P125 is disordered. The segment covering A73–A93 has biased composition (low complexity). S117 is modified (phosphoserine). The segment at residues L278 to D458 is a DNA-binding region (T-box). A Phosphothreonine modification is found at T473. The segment at A592 to P707 is required for transcription activation. The tract at residues T642 to Y689 is disordered. Over residues S648–Y657 the composition is skewed to polar residues. Over residues S667–P678 the composition is skewed to low complexity. Residues K680–Y689 show a composition bias toward basic and acidic residues.

As to expression, expressed in CD8+ T-cells.

The protein resides in the nucleus. Its function is as follows. Functions as a transcriptional activator playing a crucial role during development. Functions in trophoblast differentiation and later in gastrulation, regulating both mesoderm delamination and endoderm specification. Plays a role in brain development being required for the specification and the proliferation of the intermediate progenitor cells and their progeny in the cerebral cortex. Required for differentiation and migration of unipolar dendritic brush cells. Also involved in the differentiation of CD8+ T-cells during immune response regulating the expression of lytic effector genes. In Mus musculus (Mouse), this protein is Eomesodermin homolog (Eomes).